The chain runs to 359 residues: Peptide chain release factor 1 (359 aa).

N5-methylglutamine is present on Gln236. A disordered region spans residues 288–307 (QDEQDAERKSTIGTGDRSER). A compositionally biased stretch (basic and acidic residues) spans 293–307 (AERKSTIGTGDRSER).

It belongs to the prokaryotic/mitochondrial release factor family. Methylated by PrmC. Methylation increases the termination efficiency of RF1.

It is found in the cytoplasm. Its function is as follows. Peptide chain release factor 1 directs the termination of translation in response to the peptide chain termination codons UAG and UAA. This chain is Peptide chain release factor 1, found in Streptococcus sanguinis (strain SK36).